Reading from the N-terminus, the 314-residue chain is Serine/threonine-protein phosphatase CPPED1 (314 aa).

S2 bears the Phosphoserine mark. The interval 47–250 is catalytic; sequence KAWSTGDCDN…KVVFSGHYHR (204 aa). 4 residues coordinate a divalent metal cation: D53, D90, N127, and H247. S294 is subject to Phosphoserine.

It belongs to the metallophosphoesterase superfamily. CPPED1 family. Requires a divalent metal cation as cofactor. In terms of tissue distribution, expressed in subcutaneous adipose tissue.

The protein localises to the cytoplasm. It carries out the reaction O-phospho-L-seryl-[protein] + H2O = L-seryl-[protein] + phosphate. The enzyme catalyses O-phospho-L-threonyl-[protein] + H2O = L-threonyl-[protein] + phosphate. Its function is as follows. Protein phosphatase that dephosphorylates AKT family kinase specifically at 'Ser-473', blocking cell cycle progression and promoting cell apoptosis. May play an inhibitory role in glucose uptake by adipocytes. The polypeptide is Serine/threonine-protein phosphatase CPPED1 (CPPED1) (Homo sapiens (Human)).